We begin with the raw amino-acid sequence, 1439 residues long: Microtubule organization protein AKNA (1439 aa).

Composition is skewed to basic and acidic residues over residues 1–10 and 25–35; these read MASSETEIRW and AWAEDKRDVDR. The tract at residues 1–394 is disordered; it reads MASSETEIRW…NRKPQAPARP (394 aa). The residue at position 52 (S52) is a Phosphoserine. Basic and acidic residues predominate over residues 71–83; it reads WDPHPQPDGHQDS. The segment covering 89 to 99 has biased composition (acidic residues); that stretch reads SGEEAEAEDVD. The span at 263-275 shows a compositional bias: polar residues; the sequence is QDSSAPPAQSPQH. Basic and acidic residues predominate over residues 276–285; sequence ATDRWRRETT. 3 positions are modified to phosphoserine: S316, S499, and S534. Disordered stretches follow at residues 507–562 and 659–682; these read SAEW…SAEQ and IDQTQQEPEPPGSDSALDSTPALP. Over residues 533 to 544 the composition is skewed to low complexity; it reads LSPSSLTSMPTL. S767 and S770 each carry phosphoserine. Residues 771–804 are PEST; it reads LPEAMRMEEEEEGEEEEEEEGGGDSLEVDGVAAT. Disordered regions lie at residues 775-942 and 977-1005; these read MRME…QTPE and IPRRATEPSTPRSQAQRYLSSPSGPLRQR. The span at 778–792 shows a compositional bias: acidic residues; that stretch reads EEEEEGEEEEEEEGG. A Phosphoserine modification is found at S848. Residues 865 to 875 show a composition bias toward pro residues; the sequence is PPGPGVPPHPP. Polar residues-rich tracts occupy residues 879-891, 929-940, and 983-999; these read SAASHQSSMTSLE, SETSRVSPLTQT, and EPSTPRSQAQRYLSSPS. At S886 the chain carries Phosphoserine. Residues 911–932 form a PEST region; that stretch reads HLEETWMASPETDSGFVGSETS. Phosphoserine occurs at positions 997 and 1010. The disordered stretch occupies residues 1095 to 1165; the sequence is LHQPLQGSPT…RARSSSVPRE (71 aa). A DNA-binding region (a.T hook) is located at residues 1115–1123; the sequence is RTRGRPADS. Residues 1135 to 1147 are compositionally biased toward basic and acidic residues; it reads STERLPGEPRGEE. S1172 and S1173 each carry phosphoserine. The interval 1180–1211 is disordered; that stretch reads LPLFSEKSKTTKDSPQAARDGKRGVGSAGWPD. Position 1228 is a phosphoserine (S1228). Positions 1252–1329 are disordered; the sequence is AGGAVTGDPL…RPPPGLWYLA (78 aa). Residues 1303 to 1317 are compositionally biased toward polar residues; the sequence is SSTPSPKQRSKQAGS. S1377, S1387, and S1424 each carry phosphoserine.

The protein belongs to the AKNA family. As to quaternary structure, interacts with DCTN1. Interacts with MAPRE1/EB1. Interacts with ODF2. Interacts with CAMSAP3. Post-translationally, phosphorylated; phosphorylation regulates dissociation from and reassembly at the centrosome. Predominantly expressed by lymphoid tissues. Highly expressed in the spleen, lymph nodes and peripheral blood leukocytes, expressed at lower level in the thymus. Mainly expressed by germinal center B-lymphocytes, a stage in which receptor and ligand interactions are crucial for B-lymphocyte maturation. Expressed by B- and T-lymphocytes, Natural killer cells and CD1a(+)CD14(-) but not CD1a(-)CD14(+) dendritic cells. Weakly or not expressed in fetal liver and in adult bone marrow.

The protein localises to the cytoplasm. It is found in the cytoskeleton. The protein resides in the microtubule organizing center. It localises to the centrosome. Its subcellular location is the centriole. The protein localises to the nucleus. In terms of biological role, centrosomal protein that plays a key role in cell delamination by regulating microtubule organization. Required for the delamination and retention of neural stem cells from the subventricular zone during neurogenesis. Also regulates the epithelial-to-mesenchymal transition in other epithelial cells. Acts by increasing centrosomal microtubule nucleation and recruiting nucleation factors and minus-end stabilizers, thereby destabilizing microtubules at the adherens junctions and mediating constriction of the apical endfoot. In addition, may also act as a transcription factor that specifically activates the expression of the CD40 receptor and its ligand CD40L/CD154, two cell surface molecules on lymphocytes that are critical for antigen-dependent-B-cell development. Binds to A/T-rich promoters. It is unclear how it can both act as a microtubule organizer and as a transcription factor; additional evidences are required to reconcile these two apparently contradictory functions. The sequence is that of Microtubule organization protein AKNA from Homo sapiens (Human).